Here is a 257-residue protein sequence, read N- to C-terminus: Uracil phosphoribosyltransferase homolog (257 aa).

GTP-binding positions include R81, R90, and 124 to 127 (EKGN). R134 provides a ligand contact to 5-phospho-alpha-D-ribose 1-diphosphate. The GTP site is built by R151 and R180. Position 186–194 (186–194 (YPILSTGNT)) interacts with 5-phospho-alpha-D-ribose 1-diphosphate. 247-249 (THF) is a uracil binding site.

The protein belongs to the UPRTase family.

It localises to the cytoplasm. The protein resides in the nucleus. This is Uracil phosphoribosyltransferase homolog (uprt) from Danio rerio (Zebrafish).